A 507-amino-acid chain; its full sequence is Transcription factor SOX-9 (507 aa).

2 disordered regions span residues 1 to 67 (MNLL…SEED) and 160 to 250 (RLRV…AGKV). A compositionally biased stretch (low complexity) spans 30–41 (SAGSPCPSGSGS). The segment covering 42–52 (DTENTRPQENT) has biased composition (polar residues). 2 stretches are compositionally biased toward basic and acidic residues: residues 56-67 (GEPDLKKESEED) and 160-174 (RLRVQHKKDHPDYKY). Residues 63–103 (ESEEDKFPVCIREAVSQVLKGYDWTLVPMPVRVNGSSKNKP) are dimerization (DIM). Residues 63-103 (ESEEDKFPVCIREAVSQVLKGYDWTLVPMPVRVNGSSKNKP) form a PQA region. Ser64 bears the Phosphoserine mark. Positions 105 to 173 (VKRPMNAFMV…QHKKDHPDYK (69 aa)) form a DNA-binding region, HMG box. Residue Ser211 is modified to Phosphoserine. Residues 224–307 (PGEHSGQSQG…LPPNGHPGVP (84 aa)) form a transactivation domain (TAM) region. 2 consecutive short sequence motifs (9aaTAD) follow at residues 275 to 284 (IGELSSDVIS) and 290 to 298 (DVNEFDQYL). Positions 335 to 429 (WMSKQQAPPP…PFNLPHYNPS (95 aa)) are disordered. Residues 341-369 (APPPPPQQPPQAPQAPQAPPQQQAPPQPQ) show a composition bias toward pro residues. A compositionally biased stretch (polar residues) spans 378–420 (HTLTTLSSEPGQSQRTHIKTEQLSPSHYSEQQQHSPQQISYSP). Residues 392–507 (RTHIKTEQLS…QPVYTQLTRP (116 aa)) form a transactivation domain (TAC) region. A Glycyl lysine isopeptide (Lys-Gly) (interchain with G-Cter in ubiquitin) cross-link involves residue Lys396. The 9aaTAD 3 motif lies at 458-466 (SGLYSTFTY). Residues 477-507 (PIADTSGVPSIPQTHSPQHWEQPVYTQLTRP) form a disordered region. The segment covering 483 to 507 (GVPSIPQTHSPQHWEQPVYTQLTRP) has biased composition (polar residues).

As to quaternary structure, homodimer; homodimerization is required for activity. Interacts (via C-terminus) with ZNF219; forming a complex that binds to the COL2A1 promoter and activates COL2A1 expression. Interacts with DDRGK1. Interacts with EP300/p300. Interacts with beta-catenin (CTNNB1); inhibiting CTNNB1 activity by competing with the binding sites of TCF/LEF within CTNNB1. In terms of processing, acetylated; acetylation impairs nuclear localization and ability to transactivate expression of target genes. Deacetylated by SIRT1. Phosphorylation at Ser-64 and Ser-211 by PKA increases transcriptional activity and may help delay chondrocyte maturation downstream of PTHLH/PTHrP signaling. Phosphorylation at either Ser-64 or Ser-211 is required for sumoylation, but phosphorylation is not dependent on sumoylation. Phosphorylated on tyrosine residues; tyrosine dephosphorylation by PTPN11/SHP2 blocks SOX9 phosphorylation by PKA and subsequent SUMOylation. Post-translationally, sumoylated; phosphorylation at either Ser-64 or Ser-211 is required for sumoylation. Sumoylation is induced by BMP signaling pathway. In terms of processing, ubiquitinated; ubiquitination leads to proteasomal degradation and is negatively regulated by DDRGK1.

It is found in the nucleus. In terms of biological role, transcription factor that plays a key role in chondrocytes differentiation and skeletal development. Specifically binds the 5'-ACAAAG-3' DNA motif present in enhancers and super-enhancers and promotes expression of genes important for chondrogenesis, including cartilage matrix protein-coding genes COL2A1, COL4A2, COL9A1, COL11A2 and ACAN, SOX5 and SOX6. Also binds to some promoter regions. Plays a central role in successive steps of chondrocyte differentiation. Absolutely required for precartilaginous condensation, the first step in chondrogenesis during which skeletal progenitors differentiate into prechondrocytes. Together with SOX5 and SOX6, required for overt chondrogenesis when condensed prechondrocytes differentiate into early stage chondrocytes, the second step in chondrogenesis. Later, required to direct hypertrophic maturation and block osteoblast differentiation of growth plate chondrocytes: maintains chondrocyte columnar proliferation, delays prehypertrophy and then prevents osteoblastic differentiation of chondrocytes by lowering beta-catenin (CTNNB1) signaling and RUNX2 expression. Also required for chondrocyte hypertrophy, both indirectly, by keeping the lineage fate of chondrocytes, and directly, by remaining present in upper hypertrophic cells and transactivating COL10A1 along with MEF2C. Low lipid levels are the main nutritional determinant for chondrogenic commitment of skeletal progenitor cells: when lipids levels are low, FOXO (FOXO1 and FOXO3) transcription factors promote expression of SOX9, which induces chondrogenic commitment and suppresses fatty acid oxidation. Mechanistically, helps, but is not required, to remove epigenetic signatures of transcriptional repression and deposit active promoter and enhancer marks at chondrocyte-specific genes. Acts in cooperation with the Hedgehog pathway-dependent GLI (GLI1 and GLI3) transcription factors. In addition to cartilage development, also acts as a regulator of proliferation and differentiation in epithelial stem/progenitor cells: involved in the lung epithelium during branching morphogenesis, by balancing proliferation and differentiation and regulating the extracellular matrix. Controls epithelial branching during kidney development. This chain is Transcription factor SOX-9, found in Rattus norvegicus (Rat).